The sequence spans 250 residues: 3-deoxy-manno-octulosonate cytidylyltransferase (250 aa).

This sequence belongs to the KdsB family.

Its subcellular location is the cytoplasm. It carries out the reaction 3-deoxy-alpha-D-manno-oct-2-ulosonate + CTP = CMP-3-deoxy-beta-D-manno-octulosonate + diphosphate. It participates in nucleotide-sugar biosynthesis; CMP-3-deoxy-D-manno-octulosonate biosynthesis; CMP-3-deoxy-D-manno-octulosonate from 3-deoxy-D-manno-octulosonate and CTP: step 1/1. The protein operates within bacterial outer membrane biogenesis; lipopolysaccharide biosynthesis. In terms of biological role, activates KDO (a required 8-carbon sugar) for incorporation into bacterial lipopolysaccharide in Gram-negative bacteria. This chain is 3-deoxy-manno-octulosonate cytidylyltransferase, found in Legionella pneumophila (strain Lens).